A 120-amino-acid chain; its full sequence is NAD(P)H-quinone oxidoreductase subunit 3, chloroplastic (120 aa).

3 helical membrane passes run Tyr7–Ile27, Ser64–Met84, and Leu89–Val109.

This sequence belongs to the complex I subunit 3 family. As to quaternary structure, NDH is composed of at least 16 different subunits, 5 of which are encoded in the nucleus.

Its subcellular location is the plastid. It is found in the chloroplast thylakoid membrane. It catalyses the reaction a plastoquinone + NADH + (n+1) H(+)(in) = a plastoquinol + NAD(+) + n H(+)(out). It carries out the reaction a plastoquinone + NADPH + (n+1) H(+)(in) = a plastoquinol + NADP(+) + n H(+)(out). Its function is as follows. NDH shuttles electrons from NAD(P)H:plastoquinone, via FMN and iron-sulfur (Fe-S) centers, to quinones in the photosynthetic chain and possibly in a chloroplast respiratory chain. The immediate electron acceptor for the enzyme in this species is believed to be plastoquinone. Couples the redox reaction to proton translocation, and thus conserves the redox energy in a proton gradient. The polypeptide is NAD(P)H-quinone oxidoreductase subunit 3, chloroplastic (Psilotum nudum (Whisk fern)).